The following is a 156-amino-acid chain: Gene 55 protein (156 aa).

The segment at 132–156 (KRRWSGGNASSHEERMRGPFTEVAE) is disordered.

This Mycobacterium phage L5 (Mycobacteriophage L5) protein is Gene 55 protein (55).